A 73-amino-acid polypeptide reads, in one-letter code: MRTIISLLLLSAMVFAVIEAISLEEGLQLFEGERGCVGENQQCADWAGPHCCSGYYCTCRYFPKCICVNDNGK.

A signal peptide spans 1–20 (MRTIISLLLLSAMVFAVIEA). A propeptide spanning residues 21-34 (ISLEEGLQLFEGER) is cleaved from the precursor. Intrachain disulfides connect cysteine 36/cysteine 52, cysteine 43/cysteine 57, cysteine 51/cysteine 67, and cysteine 59/cysteine 65. Position 71 is an asparagine amide (asparagine 71).

It belongs to the neurotoxin 07 (Beta/delta-agtx) family. 03 (aga-4) subfamily. Aga sub-subfamily. In terms of tissue distribution, expressed by the venom gland.

The protein localises to the secreted. Its function is as follows. Insecticidal neurotoxin that induces an irreversible spastic paralysis when injected into insects. Modifies presynaptic voltage-gated sodium channels (Nav), causing them to open at the normal resting potential of the nerve. This leads to spontaneous release of neurotransmitter and repetitive action potentials in motor neurons. The chain is U3-agatoxin-Ao1e from Agelena orientalis (Funnel-web spider).